The primary structure comprises 460 residues: UDP-N-acetylmuramoylalanine--D-glutamate ligase (460 aa).

115 to 121 is a binding site for ATP; the sequence is GTDGKTT.

This sequence belongs to the MurCDEF family.

The protein localises to the cytoplasm. The catalysed reaction is UDP-N-acetyl-alpha-D-muramoyl-L-alanine + D-glutamate + ATP = UDP-N-acetyl-alpha-D-muramoyl-L-alanyl-D-glutamate + ADP + phosphate + H(+). The protein operates within cell wall biogenesis; peptidoglycan biosynthesis. Cell wall formation. Catalyzes the addition of glutamate to the nucleotide precursor UDP-N-acetylmuramoyl-L-alanine (UMA). The protein is UDP-N-acetylmuramoylalanine--D-glutamate ligase of Chlorobium luteolum (strain DSM 273 / BCRC 81028 / 2530) (Pelodictyon luteolum).